The primary structure comprises 405 residues: 26S proteasome regulatory subunit 8 homolog (405 aa).

The residue at position 2 (T2) is an N-acetylthreonine. An ATP-binding site is contributed by 189-196 (GPPGTGKT).

Belongs to the AAA ATPase family. In terms of assembly, may form a homodimer or a heterodimer with a related family member. Interacts with OLA1, TMA17, and UBR1. N-acetylated by NAT1.

The protein localises to the cytoplasm. It localises to the nucleus. Functionally, the 26S proteasome is involved in the ATP-dependent degradation of ubiquitinated proteins. The regulatory (or ATPase) complex confers ATP dependency and substrate specificity to the 26S complex. The protein is 26S proteasome regulatory subunit 8 homolog (RPT6) of Saccharomyces cerevisiae (strain ATCC 204508 / S288c) (Baker's yeast).